A 428-amino-acid polypeptide reads, in one-letter code: tRNA(Ile2) 2-agmatinylcytidine synthetase TiaS (428 aa).

This sequence belongs to the TiaS family.

It localises to the cytoplasm. It catalyses the reaction cytidine(34) in tRNA(Ile2) + agmatine + ATP + H2O = 2-agmatinylcytidine(34) in tRNA(Ile2) + AMP + 2 phosphate + 2 H(+). Functionally, ATP-dependent agmatine transferase that catalyzes the formation of 2-agmatinylcytidine (agm2C) at the wobble position (C34) of tRNA(Ile2), converting the codon specificity from AUG to AUA. This is tRNA(Ile2) 2-agmatinylcytidine synthetase TiaS from Methanosarcina mazei (strain ATCC BAA-159 / DSM 3647 / Goe1 / Go1 / JCM 11833 / OCM 88) (Methanosarcina frisia).